Consider the following 370-residue polypeptide: GTPase Obg (370 aa).

Positions 1–159 constitute an Obg domain; that stretch reads MKFIDEARIE…RMLRLELKVL (159 aa). An OBG-type G domain is found at 160-334; the sequence is ADVGLLGMPN…LCYAIYDYLA (175 aa). GTP is bound by residues 166–173, 191–195, 213–216, 284–287, and 315–317; these read GMPNAGKS, FTTLA, DIPG, NKLD, and SAL. Residues S173 and T193 each contribute to the Mg(2+) site. Residues 344–370 form a disordered region; it reads EEEDLATDVRFRDAPPADGGATPGDDA.

It belongs to the TRAFAC class OBG-HflX-like GTPase superfamily. OBG GTPase family. Monomer. Mg(2+) serves as cofactor.

The protein resides in the cytoplasm. Its function is as follows. An essential GTPase which binds GTP, GDP and possibly (p)ppGpp with moderate affinity, with high nucleotide exchange rates and a fairly low GTP hydrolysis rate. Plays a role in control of the cell cycle, stress response, ribosome biogenesis and in those bacteria that undergo differentiation, in morphogenesis control. This Burkholderia ambifaria (strain ATCC BAA-244 / DSM 16087 / CCUG 44356 / LMG 19182 / AMMD) (Burkholderia cepacia (strain AMMD)) protein is GTPase Obg.